We begin with the raw amino-acid sequence, 242 residues long: ATP synthase subunit a (242 aa).

Helical transmembrane passes span 21 to 41 (LSSI…AIIC), 79 to 99 (FHFL…LGLP), 116 to 136 (DATV…FYGV), 173 to 193 (LYGN…LVTG), and 198 to 218 (AWGW…SIFI).

This sequence belongs to the ATPase A chain family. As to quaternary structure, F-type ATPases have 2 components, CF(1) - the catalytic core - and CF(0) - the membrane proton channel. CF(1) has five subunits: alpha(3), beta(3), gamma(1), delta(1), epsilon(1). CF(0) has three main subunits: a(1), b(2) and c(9-12). The alpha and beta chains form an alternating ring which encloses part of the gamma chain. CF(1) is attached to CF(0) by a central stalk formed by the gamma and epsilon chains, while a peripheral stalk is formed by the delta and b chains.

The protein localises to the cell membrane. Key component of the proton channel; it plays a direct role in the translocation of protons across the membrane. The sequence is that of ATP synthase subunit a from Staphylococcus saprophyticus subsp. saprophyticus (strain ATCC 15305 / DSM 20229 / NCIMB 8711 / NCTC 7292 / S-41).